We begin with the raw amino-acid sequence, 501 residues long: 1-aminocyclopropane-1-carboxylate synthase-like protein 1 (501 aa).

E105 contacts substrate. Position 323 is an N6-(pyridoxal phosphate)lysine (K323). A disordered region spans residues 480–501 (GKSQVAEDPRPSQSQEPSDQRR). Residues 490–501 (PSQSQEPSDQRR) are compositionally biased toward polar residues.

Belongs to the class-I pyridoxal-phosphate-dependent aminotransferase family.

Does not catalyze the synthesis of 1-aminocyclopropane-1-carboxylate but is capable of catalyzing the deamination of L-vinylglycine. The sequence is that of 1-aminocyclopropane-1-carboxylate synthase-like protein 1 (ACCS) from Homo sapiens (Human).